The primary structure comprises 53 residues: Mannose/glucose-specific lectin alpha 1 chain (53 aa).

It belongs to the leguminous lectin family. As to quaternary structure, tetramer of two alpha and two beta chains.

The polypeptide is Mannose/glucose-specific lectin alpha 1 chain (Lathyrus ochrus (Cyprus-vetch)).